The primary structure comprises 171 residues: Nudix hydrolase DR_0079 (171 aa).

The Nudix hydrolase domain maps to 32–162 (ERVRVVNAFL…EAAKGDLAEL (131 aa)). The short motif at 69–91 (GGAVQSGETYEEAFRREAREELN) is the Nudix box element. Mg(2+)-binding residues include glutamate 85 and glutamate 89.

Belongs to the Nudix hydrolase family. As to quaternary structure, monomer. Requires Mg(2+) as cofactor.

Inhibited by zinc, calcium or copper ions. Functionally, hydrolase that converts various nucleotide triphosphates (NTPs) to the corresponding nucleotide monophosphates and diphosphate, and nucleotide diphosphates to nucleotide monophosphates and inorganic phosphate. Has a marked preference for cytosine ribonucleoside 5'-diphosphate (CDP) and cytosine ribonucleoside 5'-triphosphate (CTP). Has lower activity towards the deoxyribose nucleotides dCDP and dCTP, and towards dGDP, TDP and UDP. The chain is Nudix hydrolase DR_0079 from Deinococcus radiodurans (strain ATCC 13939 / DSM 20539 / JCM 16871 / CCUG 27074 / LMG 4051 / NBRC 15346 / NCIMB 9279 / VKM B-1422 / R1).